We begin with the raw amino-acid sequence, 313 residues long: Ribosomal RNA small subunit methyltransferase H (313 aa).

S-adenosyl-L-methionine-binding positions include 35–37 (GGH), Asp55, Phe80, Asp102, and Gln109.

It belongs to the methyltransferase superfamily. RsmH family.

The protein localises to the cytoplasm. It carries out the reaction cytidine(1402) in 16S rRNA + S-adenosyl-L-methionine = N(4)-methylcytidine(1402) in 16S rRNA + S-adenosyl-L-homocysteine + H(+). Its function is as follows. Specifically methylates the N4 position of cytidine in position 1402 (C1402) of 16S rRNA. The chain is Ribosomal RNA small subunit methyltransferase H from Shewanella oneidensis (strain ATCC 700550 / JCM 31522 / CIP 106686 / LMG 19005 / NCIMB 14063 / MR-1).